The primary structure comprises 80 residues: Caltrin (80 aa).

A signal peptide spans 1–32 (MMAGRRSWPAMATVLLALLVCLGELVDSKPQP).

In terms of biological role, inhibits calcium transport into spermatozoa; it does not bind directly to calcium. Binds to calmodulin. Inhibits the growth of microorganisms. Seem to act as an antibiotic by permeabilizing the bacterial membrane. In Bos taurus (Bovine), this protein is Caltrin (PYY2).